The chain runs to 285 residues: MITSNTSFLALIGNPVSHSLSPIMQNAAIKYLGLDLIYIAIPCKNEDLEIVVNSLKKMNCKGLNITIPFKKKVFDLCSEISPVAKKIQAINTLKLKNDNNWSGTNTDIEGFIYPLKNLNLTNKNSIILGSGGAARSVIQGLIDLKLSKITIISRNNNSLNELITLFKNDIKIEGILNTNDEIGNLIEETDLIVNTTPIGMSQTSDNDAIPFGQSSWETIDSNTIVYDLIYNPSPTPFLKFCDRKGCMTIDGTQMLIAQGAKSLSFWTNGLEVPFEVMHDALKKYL.

Shikimate contacts are provided by residues 19-21 (SLS) and Thr-66. The active-site Proton acceptor is Lys-70. 2 residues coordinate shikimate: Asn-91 and Asp-107. NADP(+) is bound by residues 129-133 (GSGGA) and Leu-228. Residue Tyr-230 participates in shikimate binding. Gly-251 lines the NADP(+) pocket.

Belongs to the shikimate dehydrogenase family. As to quaternary structure, homodimer.

The catalysed reaction is shikimate + NADP(+) = 3-dehydroshikimate + NADPH + H(+). Its pathway is metabolic intermediate biosynthesis; chorismate biosynthesis; chorismate from D-erythrose 4-phosphate and phosphoenolpyruvate: step 4/7. In terms of biological role, involved in the biosynthesis of the chorismate, which leads to the biosynthesis of aromatic amino acids. Catalyzes the reversible NADPH linked reduction of 3-dehydroshikimate (DHSA) to yield shikimate (SA). The chain is Shikimate dehydrogenase (NADP(+)) from Prochlorococcus marinus (strain MIT 9515).